We begin with the raw amino-acid sequence, 247 residues long: Triosephosphate isomerase (247 aa).

The substrate site is built by Asn10 and Lys12. His94 acts as the Electrophile in catalysis. The Proton acceptor role is filled by Glu164.

The protein belongs to the triosephosphate isomerase family. Homodimer.

The catalysed reaction is D-glyceraldehyde 3-phosphate = dihydroxyacetone phosphate. It participates in carbohydrate biosynthesis; gluconeogenesis. Its pathway is carbohydrate degradation; glycolysis; D-glyceraldehyde 3-phosphate from glycerone phosphate: step 1/1. The sequence is that of Triosephosphate isomerase (Tpi) from Drosophila simulans (Fruit fly).